A 452-amino-acid chain; its full sequence is Pup--protein ligase (452 aa).

E9 is a binding site for Mg(2+). Residue R53 coordinates ATP. Residue Y55 participates in Mg(2+) binding. Residue D57 is the Proton acceptor of the active site. E63 contributes to the Mg(2+) binding site. ATP contacts are provided by T66 and W419.

This sequence belongs to the Pup ligase/Pup deamidase family. Pup-conjugating enzyme subfamily.

The enzyme catalyses ATP + [prokaryotic ubiquitin-like protein]-L-glutamate + [protein]-L-lysine = ADP + phosphate + N(6)-([prokaryotic ubiquitin-like protein]-gamma-L-glutamyl)-[protein]-L-lysine.. The protein operates within protein degradation; proteasomal Pup-dependent pathway. Its pathway is protein modification; protein pupylation. Functionally, catalyzes the covalent attachment of the prokaryotic ubiquitin-like protein modifier Pup to the proteasomal substrate proteins, thereby targeting them for proteasomal degradation. This tagging system is termed pupylation. The ligation reaction involves the side-chain carboxylate of the C-terminal glutamate of Pup and the side-chain amino group of a substrate lysine. The chain is Pup--protein ligase from Nocardia farcinica (strain IFM 10152).